The sequence spans 129 residues: Glycine cleavage system H protein (129 aa).

Residues 24–106 (LLKIGVSEFA…IGDGWLVILK (83 aa)) enclose the Lipoyl-binding domain. K65 carries the N6-lipoyllysine modification.

It belongs to the GcvH family. The glycine cleavage system is composed of four proteins: P, T, L and H. (R)-lipoate serves as cofactor.

Its function is as follows. The glycine cleavage system catalyzes the degradation of glycine. The H protein shuttles the methylamine group of glycine from the P protein to the T protein. The protein is Glycine cleavage system H protein of Prochlorococcus marinus (strain MIT 9301).